A 309-amino-acid chain; its full sequence is S-antigen protein (309 aa).

The N-terminal stretch at 1 to 23 (MNRILSVSFYLFFLYLYIYKTYG) is a signal peptide. Residues 52–309 (GKGNKYEDLQ…KSIMNMLILM (258 aa)) form a disordered region. A compositionally biased stretch (acidic residues) spans 60–86 (LQEEGEGENDDEEHSNSEESDNDEENE). Basic and acidic residues predominate over residues 93–259 (EAPKSDEAEA…DEAEARKSEA (167 aa)). The 20 X 8 AA approximate tandem repeats of A-[RL]-K-S-D-E-A-E stretch occupies residues 97–256 (SDEAEALKSD…RKSDEAEARK (160 aa)). A run of 2 repeats spans residues 257–271 (SEAGTEGPKGTGGPG) and 272–286 (SEAGTEGPKGTGGPG). Positions 257-286 (SEAGTEGPKGTGGPGSEAGTEGPKGTGGPG) are 2 X 15 AA tandem repeats of S-E-A-G-T-E-G-P-K-G-T-G-G-P-G. Gly residues predominate over residues 263–289 (GPKGTGGPGSEAGTEGPKGTGGPGSGG).

It localises to the parasitophorous vacuole. S antigens are soluble heat-stable proteins present in the sera of some infected individuals. The chain is S-antigen protein from Plasmodium falciparum (isolate NF7 / Ghana).